The chain runs to 87 residues: HssA/B-like protein 7 (87 aa).

Residues 1 to 22 show a composition bias toward polar residues; the sequence is MSILSALTSISNPMKSTKSSVA. The interval 1 to 23 is disordered; it reads MSILSALTSISNPMKSTKSSVAN.

Belongs to the hssA/B family.

The chain is HssA/B-like protein 7 (hssl7) from Dictyostelium discoideum (Social amoeba).